A 179-amino-acid chain; its full sequence is NAD(P)H-quinone oxidoreductase subunit I, chloroplastic (179 aa).

2 consecutive 4Fe-4S ferredoxin-type domains span residues 55–84 and 95–124; these read GRIH…VDWR and LNYS…MTEE. Residues C64, C67, C70, C74, C104, C107, C110, and C114 each contribute to the [4Fe-4S] cluster site.

It belongs to the complex I 23 kDa subunit family. NDH is composed of at least 16 different subunits, 5 of which are encoded in the nucleus. [4Fe-4S] cluster is required as a cofactor.

The protein resides in the plastid. It localises to the chloroplast thylakoid membrane. The catalysed reaction is a plastoquinone + NADH + (n+1) H(+)(in) = a plastoquinol + NAD(+) + n H(+)(out). It catalyses the reaction a plastoquinone + NADPH + (n+1) H(+)(in) = a plastoquinol + NADP(+) + n H(+)(out). Functionally, NDH shuttles electrons from NAD(P)H:plastoquinone, via FMN and iron-sulfur (Fe-S) centers, to quinones in the photosynthetic chain and possibly in a chloroplast respiratory chain. The immediate electron acceptor for the enzyme in this species is believed to be plastoquinone. Couples the redox reaction to proton translocation, and thus conserves the redox energy in a proton gradient. The protein is NAD(P)H-quinone oxidoreductase subunit I, chloroplastic of Nymphaea alba (White water-lily).